A 740-amino-acid chain; its full sequence is Platelet endothelial cell adhesion molecule (740 aa).

Residues 1–27 form the signal peptide; it reads MRLRWTQGGNMWLGVLLTLQLCSSLEG. Topologically, residues 28 to 602 are extracellular; the sequence is QENSFTINSI…VRVYLAPWKK (575 aa). Ig-like C2-type domains lie at 35–126, 145–223, and 236–315; these read NSIH…YKVV, GGVV…DSVR, and PKFH…SKVS. N-linked (GlcNAc...) asparagine glycosylation is found at asparagine 52 and asparagine 84. Cystine bridges form between cysteine 57/cysteine 109, cysteine 152/cysteine 206, and cysteine 256/cysteine 304. 8 N-linked (GlcNAc...) asparagine glycosylation sites follow: asparagine 284, asparagine 301, asparagine 320, asparagine 357, asparagine 372, asparagine 436, asparagine 456, and asparagine 552. Ig-like C2-type domains lie at 328–404, 425–494, and 500–592; these read PKLK…VQIA, GQTI…KVLR, and PVEE…NILA. Cystine bridges form between cysteine 347/cysteine 387, cysteine 432/cysteine 477, and cysteine 524/cysteine 573. A helical transmembrane segment spans residues 603–621; sequence GLIAVVVIAVIIAVLLLGA. Residues 622–740 are Cytoplasmic-facing; sequence RFYFLKKSKA…SRTEGSLDGT (119 aa). 2 short sequence motifs (ITIM motif) span residues 690-695 and 713-718; these read VEYTEV and TVYSEI. A phosphotyrosine; by FER mark is found at tyrosine 692 and tyrosine 715. A disordered region spans residues 697-740; it reads VTSPEPHRGLGTKGTETVYSEIRKADPDLVENRYSRTEGSLDGT. The tract at residues 711–731 is membrane-bound segment which detaches upon phosphorylation; it reads TETVYSEIRKADPDLVENRYS. Over residues 717–732 the composition is skewed to basic and acidic residues; the sequence is EIRKADPDLVENRYSR. The interval 723 to 740 is may play a role in cytoprotective signaling; that stretch reads PDLVENRYSRTEGSLDGT. Phosphoserine occurs at positions 731 and 736.

In terms of assembly, trans-homodimer (via Ig-like C2-type 1 and Ig-like C2-type 2 domains); trans-homodimerization is required for cell-cell interaction. Forms a complex with BDKRB2 and GNAQ. Interacts with BDKRB2 and GNAQ. Interacts with PTPN11; Tyr-715 is critical for PTPN11 recruitment. Interacts with FER. Interacts with CD177; the interaction is Ca(2+)-dependent; the interaction is direct. Post-translationally, phosphorylated on Ser and Tyr residues by src kinases after cellular activation. Upon activation, phosphorylated on Ser-731 which probably initiates the dissociation of the membrane-interaction segment (residues 711-731) from the cell membrane allowing the sequential phosphorylation of Tyr-715 and Tyr-692. Constitutively phosphorylated on Ser-736 in resting platelets. Phosphorylated on tyrosine residues by FER and FES in response to FCER1 activation. In endothelial cells Fyn mediates mechanical-force (stretch or pull) induced tyrosine phosphorylation. In terms of processing, palmitoylation by ZDHHC21 is necessary for cell surface expression in endothelial cells and enrichment in membrane rafts.

It localises to the cell membrane. It is found in the membrane raft. The protein resides in the cell junction. Functionally, cell adhesion molecule which is required for leukocyte transendothelial migration (TEM) under most inflammatory conditions. Tyr-692 plays a critical role in TEM and is required for efficient trafficking of PECAM1 to and from the lateral border recycling compartment (LBRC) and is also essential for the LBRC membrane to be targeted around migrating leukocytes. Trans-homophilic interaction may play a role in endothelial cell-cell adhesion via cell junctions. Heterophilic interaction with CD177 plays a role in transendothelial migration of neutrophils. Homophilic ligation of PECAM1 prevents macrophage-mediated phagocytosis of neighboring viable leukocytes by transmitting a detachment signal. Promotes macrophage-mediated phagocytosis of apoptotic leukocytes by tethering them to the phagocytic cells; PECAM1-mediated detachment signal appears to be disabled in apoptotic leukocytes. Modulates bradykinin receptor BDKRB2 activation. Regulates bradykinin- and hyperosmotic shock-induced ERK1/2 activation in endothelial cells. Induces susceptibility to atherosclerosis. This chain is Platelet endothelial cell adhesion molecule (PECAM1), found in Sus scrofa (Pig).